Here is a 217-residue protein sequence, read N- to C-terminus: Probable transaldolase (217 aa).

The active-site Schiff-base intermediate with substrate is the K83.

It belongs to the transaldolase family. Type 3B subfamily.

It is found in the cytoplasm. It carries out the reaction D-sedoheptulose 7-phosphate + D-glyceraldehyde 3-phosphate = D-erythrose 4-phosphate + beta-D-fructose 6-phosphate. It functions in the pathway carbohydrate degradation; pentose phosphate pathway; D-glyceraldehyde 3-phosphate and beta-D-fructose 6-phosphate from D-ribose 5-phosphate and D-xylulose 5-phosphate (non-oxidative stage): step 2/3. Transaldolase is important for the balance of metabolites in the pentose-phosphate pathway. This Clostridium botulinum (strain Loch Maree / Type A3) protein is Probable transaldolase.